The following is a 237-amino-acid chain: uncharacterized protein (237 aa).

This is an uncharacterized protein from Dictyostelium discoideum (Social amoeba).